We begin with the raw amino-acid sequence, 67 residues long: Conotoxin AbVIN (67 aa).

Residues 1-17 form the signal peptide; it reads VIIIAVLFLTACQLIAT. Residues 18 to 40 constitute a propeptide that is removed on maturation; that stretch reads ASYARSERKHPDLRLSSRNSKLS. Disulfide bonds link C43-C57, C50-C61, and C56-C66.

It belongs to the conotoxin O1 superfamily. As to expression, expressed by the venom duct.

It localises to the secreted. This Conus abbreviatus (Abbreviated cone) protein is Conotoxin AbVIN.